The sequence spans 1259 residues: Bud site selection protein 4 homolog (1259 aa).

Disordered regions lie at residues 185–416, 428–455, and 862–902; these read YDRG…MVKP, LHLG…DAMK, and SGLG…KKRT. Basic and acidic residues predominate over residues 247–267; that stretch reads ATDKRSLTDKTVPDNRGENER. The segment covering 277–289 has biased composition (polar residues); it reads RNPSIETGTTDEY. Basic and acidic residues-rich tracts occupy residues 305–324 and 368–391; these read DDSK…KPQR and IRDR…DHEL. The segment covering 397-411 has biased composition (low complexity); sequence SARTNSSASGNSSDS. The region spanning 1128-1239 is the PH domain; sequence AIAMEGFMWQ…WIEKLRKVIE (112 aa).

It belongs to the BUD4 family.

Its subcellular location is the cell septum. May be involved in the septin organization at the site of septation. In Eremothecium gossypii (strain ATCC 10895 / CBS 109.51 / FGSC 9923 / NRRL Y-1056) (Yeast), this protein is Bud site selection protein 4 homolog (BUD4).